The primary structure comprises 384 residues: Succinyl-diaminopimelate desuccinylase (384 aa).

His72 provides a ligand contact to Zn(2+). Asp74 is a catalytic residue. Asp105 is a binding site for Zn(2+). Catalysis depends on Glu139, which acts as the Proton acceptor. The Zn(2+) site is built by Glu140, Glu168, and His355.

This sequence belongs to the peptidase M20A family. DapE subfamily. Homodimer. Zn(2+) serves as cofactor. Co(2+) is required as a cofactor.

It catalyses the reaction N-succinyl-(2S,6S)-2,6-diaminopimelate + H2O = (2S,6S)-2,6-diaminopimelate + succinate. Its pathway is amino-acid biosynthesis; L-lysine biosynthesis via DAP pathway; LL-2,6-diaminopimelate from (S)-tetrahydrodipicolinate (succinylase route): step 3/3. Catalyzes the hydrolysis of N-succinyl-L,L-diaminopimelic acid (SDAP), forming succinate and LL-2,6-diaminopimelate (DAP), an intermediate involved in the bacterial biosynthesis of lysine and meso-diaminopimelic acid, an essential component of bacterial cell walls. This chain is Succinyl-diaminopimelate desuccinylase, found in Blochmanniella pennsylvanica (strain BPEN).